A 60-amino-acid chain; its full sequence is Naniproin (60 aa).

4 disulfide bridges follow: Cys3-Cys21, Cys14-Cys38, Cys42-Cys53, and Cys54-Cys59.

It belongs to the three-finger toxin family. Short-chain subfamily. Type IA cytotoxin sub-subfamily. Monomer in solution; Homodimer and oligomer in the presence of negatively charged lipids forming a pore with a size ranging between 20 and 30 angstroms. Expressed by the venom gland.

The protein localises to the secreted. Its subcellular location is the target cell membrane. Basic protein that binds to cell membrane and depolarizes cardiomyocytes. This cytotoxin also possesses lytic activity on many other cells, including red blood cells. Interaction with sulfatides in the cell membrane induces pore formation and cell internalization and is responsible for cytotoxicity in cardiomyocytes. It targets the mitochondrial membrane and induces mitochondrial swelling and fragmentation. Inhibits protein kinases C. It binds to the integrin alpha-V/beta-3 with a moderate affinity. This chain is Naniproin, found in Naja nigricollis (Black-necked spitting cobra).